The following is a 263-amino-acid chain: Pollen allergen Phl p 1 (263 aa).

Residues 1-23 (MASSSSVLLVVVLFAVFLGSAYG) form the signal peptide. N32 carries N-linked (GlcNAc...) asparagine glycosylation. One can recognise an Expansin-like EG45 domain in the interval 61–167 (GGACGYKDVD…RRVKCKYPEG (107 aa)). Cystine bridges form between C64–C92, C95–C162, and C100–C106. The 82-residue stretch at 181 to 262 (NYLALLVKYV…GWKADTSYES (82 aa)) folds into the Expansin-like CBD domain.

Belongs to the expansin family. Expansin B subfamily. As to quaternary structure, homodimer.

The protein resides in the secreted. In Phleum pratense (Common timothy), this protein is Pollen allergen Phl p 1 (PHLPI).